We begin with the raw amino-acid sequence, 434 residues long: Ribulose bisphosphate carboxylase-like protein (434 aa).

Positions 198, 200, and 201 each coordinate Mg(2+). K198 is subject to N6-carboxylysine.

This sequence belongs to the RuBisCO large chain family. Type IV subfamily. In terms of assembly, homodimer. Mg(2+) serves as cofactor.

May be involved in sulfur metabolism and oxidative stress response. Does not show RuBisCO activity. The chain is Ribulose bisphosphate carboxylase-like protein from Chlorobaculum thiosulfatiphilum (Chlorobium limicola f.sp. thiosulfatophilum).